The sequence spans 492 residues: Solute carrier family 2, facilitated glucose transporter member 1 (492 aa).

M1 carries the post-translational modification N-acetylmethionine. The Cytoplasmic portion of the chain corresponds to 1–11; that stretch reads MEPTSKKLTGR. Residues 12 to 33 form a helical membrane-spanning segment; the sequence is LMLAVGGAVLGSLQFGYNTGVI. Over 34–66 the chain is Extracellular; the sequence is NAPQKVIEEFYNQTWVQRYGEPIPPATLTTLWS. A glycan (N-linked (GlcNAc...) asparagine) is linked at N45. The chain crosses the membrane as a helical span at residues 67–87; sequence LSVAIFSVGGMIGSFSVGLFV. Over 88–90 the chain is Cytoplasmic; it reads NRF. A helical membrane pass occupies residues 91–112; the sequence is GRRNSMLMMNLLAFVSAVLMGF. At 113-120 the chain is on the extracellular side; the sequence is SKLGKSFE. The helical transmembrane segment at 121 to 144 threads the bilayer; it reads MLILGRFIIGVYCGLTTGFVPMYV. At 145–155 the chain is on the cytoplasmic side; sequence GEVSPTELRGA. The chain crosses the membrane as a helical span at residues 156 to 176; it reads LGTLHQLGIVVGILIAQVFGL. Q161 is a binding site for D-glucose. Residues 177 to 185 lie on the Extracellular side of the membrane; that stretch reads DSIMGNQEL. Residues 186–206 traverse the membrane as a helical segment; that stretch reads WPLLLSVIFIPALLQCILLPF. Topologically, residues 207–271 are cytoplasmic; that stretch reads CPESPRFLLI…LFRSAAYRQP (65 aa). S226 bears the Phosphoserine mark. The chain crosses the membrane as a helical span at residues 272–293; it reads ILIAVVLQLSQQLSGINAVFYY. Residues 282-283 and N288 each bind D-glucose; that span reads QQ. The Extracellular segment spans residues 294–306; the sequence is STSIFEKAGVQQP. Residues 307-328 form a helical membrane-spanning segment; that stretch reads VYATIGSGIVNTAFTVVSLFVV. N317 is a D-glucose binding site. At 329–334 the chain is on the cytoplasmic side; that stretch reads ERAGRR. The chain crosses the membrane as a helical span at residues 335–355; the sequence is TLHLIGLAGMAGCAVLMTIAL. Residues 356 to 365 lie on the Extracellular side of the membrane; it reads ALLERLPWMS. The chain crosses the membrane as a helical span at residues 366–388; that stretch reads YLSIVAIFGFVAFFEVGPGPIPW. The D-glucose site is built by E380 and W388. At 389–401 the chain is on the cytoplasmic side; that stretch reads FIVAELFSQGPRP. A helical transmembrane segment spans residues 402-422; that stretch reads AAIAVAGFSNWTSNFIVGMCF. Residues 423–429 are Extracellular-facing; sequence QYVEQLC. The chain crosses the membrane as a helical span at residues 430-450; sequence GPYVFIIFTVLLVLFFIFTYF. Over 451-492 the chain is Cytoplasmic; sequence KVPETKGRTFDEIASGFRQGGASQSDKTPEELFHPLGADSQV. S465 bears the Phosphoserine mark. Positions 468-492 are disordered; that stretch reads RQGGASQSDKTPEELFHPLGADSQV. T478 is modified (phosphothreonine). A Phosphoserine modification is found at S490.

Belongs to the major facilitator superfamily. Sugar transporter (TC 2.A.1.1) family. Glucose transporter subfamily. In terms of assembly, found in a complex with ADD2, DMTN and SLC2A1. Interacts (via C-terminus cytoplasmic region) with DMTN. Interacts with SNX27; the interaction is required when endocytosed to prevent degradation in lysosomes and promote recycling to the plasma membrane. Interacts with GIPC (via PDZ domain). Interacts with STOM. Interacts with SGTA (via Gln-rich region). Interacts with BSG. Interacts with SMIM43; the interaction may promote SLC2A1-mediated glucose transport to meet the energy needs of mesendoderm differentiation. Post-translationally, phosphorylation at Ser-226 by PKC promotes glucose uptake by increasing cell membrane localization. In terms of tissue distribution, detected in brain capillary (at protein level). Detected in brain capillary.

The protein localises to the cell membrane. It is found in the photoreceptor inner segment. It catalyses the reaction D-glucose(out) = D-glucose(in). The uptake of glucose is inhibited by cytochalasin B. Glucose uptake is increased in response to phorbol ester 12-O-tetradecanoylphorbol-13-acetate (TPA) treatment: TPA-induced glucose uptake requires phosphorylation at Ser-226. Functionally, facilitative glucose transporter, which is responsible for constitutive or basal glucose uptake. Has a very broad substrate specificity; can transport a wide range of aldoses including both pentoses and hexoses. Most important energy carrier of the brain: present at the blood-brain barrier and assures the energy-independent, facilitative transport of glucose into the brain. In association with BSG and NXNL1, promotes retinal cone survival by increasing glucose uptake into photoreceptors. Required for mesendoderm differentiation. The protein is Solute carrier family 2, facilitated glucose transporter member 1 of Bos taurus (Bovine).